The chain runs to 449 residues: MENIHDLWERALKSMEKKVSKPSFETWLKQTKANSIEDSTIIITAPNEFARDWLEKHYDELISETIDDLTGVRLYPKFVIPTSQLDEPFVEQELKKPMKQPPAQNGEMPNNMLNDKYTFDTFVIGSGNRFAHAASLAVAEAPAKAYNPLFIYGGVGLGKTHLMHAIGHYVMDHNPNAKVVYLSSEKFTNEFINAIRDNKAVNFRNKYRNVDVLLIDDIQFLAGKEQTQEEFFHTFNALHEDNKQIVISSDRPPKEIPTLEDRLRSRFEWGLITDITPPDLETRIAILRKKAKAENLDIPNEVMLYIANQIDTNIRELEGALIRVVAYSSLINQDMNADLAAEALKDIIPNAKPRVLTITDIQKTVGEYFHVKLEDFKAKKRTKSVAFPRQIAMYLSRELTDASLPKIGSEFGGRDHTTVIHAHEKISKLLSTDQELQDKIQDISDKLRS.

Residues 1-72 (MENIHDLWER…SETIDDLTGV (72 aa)) form a domain I, interacts with DnaA modulators region. The domain II stretch occupies residues 72–111 (VRLYPKFVIPTSQLDEPFVEQELKKPMKQPPAQNGEMPNN). The segment at 112–328 (MLNDKYTFDT…GALIRVVAYS (217 aa)) is domain III, AAA+ region. Residues Gly156, Gly158, Lys159, and Thr160 each coordinate ATP. Positions 329–449 (SLINQDMNAD…IQDISDKLRS (121 aa)) are domain IV, binds dsDNA.

It belongs to the DnaA family. As to quaternary structure, oligomerizes as a right-handed, spiral filament on DNA at oriC.

The protein resides in the cytoplasm. In terms of biological role, plays an essential role in the initiation and regulation of chromosomal replication. ATP-DnaA binds to the origin of replication (oriC) to initiate formation of the DNA replication initiation complex once per cell cycle. Binds the DnaA box (a 9 base pair repeat at the origin) and separates the double-stranded (ds)DNA. Forms a right-handed helical filament on oriC DNA; dsDNA binds to the exterior of the filament while single-stranded (ss)DNA is stabiized in the filament's interior. The ATP-DnaA-oriC complex binds and stabilizes one strand of the AT-rich DNA unwinding element (DUE), permitting loading of DNA polymerase. After initiation quickly degrades to an ADP-DnaA complex that is not apt for DNA replication. Binds acidic phospholipids. The sequence is that of Chromosomal replication initiator protein DnaA from Halalkalibacterium halodurans (strain ATCC BAA-125 / DSM 18197 / FERM 7344 / JCM 9153 / C-125) (Bacillus halodurans).